The chain runs to 282 residues: MAITAAQVKELRDRTGAGMMDCKKALTETAGDIELAIDNMRKSGAAKAAKKAGNIAAEGTILIKNGEGYAALLEVNCQTDFVAKDSNFLAFANEVLDVAAASKVTIEDLKAQFEETRVALVAKIGENINVRRVEYIDGANLAQYRHGERIGVVVTGEADEETLKHVAMHVAASKPEYVNPSDVPAEVVEKEKALQIEIAMNEGKPAEIAEKMVIGRMKKFTGEVSLTGQAYIMEPKKTVGEVLKEKGASVSNFIRLEVGEGIERKEEDFAAEVAAQIAATKA.

Positions 79 to 82 (TDFV) are involved in Mg(2+) ion dislocation from EF-Tu.

Belongs to the EF-Ts family.

The protein resides in the cytoplasm. Functionally, associates with the EF-Tu.GDP complex and induces the exchange of GDP to GTP. It remains bound to the aminoacyl-tRNA.EF-Tu.GTP complex up to the GTP hydrolysis stage on the ribosome. This Shewanella woodyi (strain ATCC 51908 / MS32) protein is Elongation factor Ts.